Here is a 317-residue protein sequence, read N- to C-terminus: Gluconeogenesis factor (317 aa).

Belongs to the gluconeogenesis factor family.

Its subcellular location is the cytoplasm. In terms of biological role, required for morphogenesis under gluconeogenic growth conditions. Required, in gluconeogenic growth conditions, for the correct localization of PBP1 and hence for displaying a normal rod shape. This Bacillus subtilis (strain 168) protein is Gluconeogenesis factor (mgfK).